Consider the following 485-residue polypeptide: Shutoff alkaline exonuclease (485 aa).

The protein belongs to the herpesviridae alkaline nuclease family. In terms of assembly, forms a complex with the DNA polymerase, the DNA polymerase processivity factor, and the major DNA binding protein.

Its subcellular location is the host nucleus. It is found in the host cytoplasm. Its function is as follows. Plays a role in processing non linear or branched viral DNA intermediates in order to promote the production of mature packaged unit-length linear progeny viral DNA molecules. Exhibits endonuclease and exonuclease activities and accepts both double-stranded and single-stranded DNA as substrate. Exonuclease digestion of DNA is in the 5'-&gt; 3' direction and the products are 5'-monophosphate nucleosides. Additionally, forms a recombinase with the major DNA-binding protein, which displays strand exchange activity. Also acts as a cytoplasmic RNA endonuclease that induces degradation of the majority of the cellular messenger RNAs during early lytic infection. The resulting inhibition of cellular protein synthesis serves to ensure maximal viral gene expression and evasion from host immune response. Internally cleaves host mRNAs which are then degraded by the cellular exonuclease XRN1. Bypasses therefore the regulatory steps of deadenylation and decapping normally required for XRN1 activation. This Alcelaphine herpesvirus 1 (strain C500) (AlHV-1) protein is Shutoff alkaline exonuclease (37).